Here is a 220-residue protein sequence, read N- to C-terminus: Redox-sensing transcriptional repressor Rex (220 aa).

Residues 17 to 56 (LYARSLRYLLQEGVESVSSQELGDRINVTAAQIRKDLSYF) constitute a DNA-binding region (H-T-H motif). An NAD(+)-binding site is contributed by 91-96 (GIGHLG).

It belongs to the transcriptional regulatory Rex family. Homodimer.

The protein localises to the cytoplasm. Functionally, modulates transcription in response to changes in cellular NADH/NAD(+) redox state. In Roseiflexus sp. (strain RS-1), this protein is Redox-sensing transcriptional repressor Rex.